Here is a 154-residue protein sequence, read N- to C-terminus: 3-hydroxyacyl-[acyl-carrier-protein] dehydratase FabZ (154 aa).

The active site involves histidine 54.

This sequence belongs to the thioester dehydratase family. FabZ subfamily.

Its subcellular location is the cytoplasm. The catalysed reaction is a (3R)-hydroxyacyl-[ACP] = a (2E)-enoyl-[ACP] + H2O. In terms of biological role, involved in unsaturated fatty acids biosynthesis. Catalyzes the dehydration of short chain beta-hydroxyacyl-ACPs and long chain saturated and unsaturated beta-hydroxyacyl-ACPs. This is 3-hydroxyacyl-[acyl-carrier-protein] dehydratase FabZ from Chlamydia caviae (strain ATCC VR-813 / DSM 19441 / 03DC25 / GPIC) (Chlamydophila caviae).